A 227-amino-acid polypeptide reads, in one-letter code: MELVFIRHGQSEWNAKNLFTGWRDVKLSEQGLAEAAAAGKKLKENGYEFDIAFTSVLTRAIKTCNIVLEESDQLFVPQIKTWRLNERHYGQLQGLDKKQTAEKYGDEQVRIWRRSYDTLPPLLDKDDEFSAHKDRRYAHLPADVVPDGENLKVTLERVLPFWEDQIAPAILSGKRVLVAAHGNSLRALAKHIEGISDEDIMGLEIPTGQPLVYKLDDNLKVLEKFYL.

Residues 7-14 (RHGQSEWN), 20-21 (TG), R59, 86-89 (ERHY), K97, 113-114 (RR), and 182-183 (GN) contribute to the substrate site. Residue H8 is the Tele-phosphohistidine intermediate of the active site. E86 (proton donor/acceptor) is an active-site residue.

It belongs to the phosphoglycerate mutase family. BPG-dependent PGAM subfamily. As to quaternary structure, homodimer.

It catalyses the reaction (2R)-2-phosphoglycerate = (2R)-3-phosphoglycerate. Its pathway is carbohydrate degradation; glycolysis; pyruvate from D-glyceraldehyde 3-phosphate: step 3/5. In terms of biological role, catalyzes the interconversion of 2-phosphoglycerate and 3-phosphoglycerate. The chain is 2,3-bisphosphoglycerate-dependent phosphoglycerate mutase from Neisseria meningitidis serogroup C (strain 053442).